A 199-amino-acid chain; its full sequence is 7-methyl-GTP pyrophosphatase (199 aa).

The Proton acceptor role is filled by Asp73.

Belongs to the Maf family. YceF subfamily. A divalent metal cation serves as cofactor.

It is found in the cytoplasm. The enzyme catalyses N(7)-methyl-GTP + H2O = N(7)-methyl-GMP + diphosphate + H(+). Nucleoside triphosphate pyrophosphatase that hydrolyzes 7-methyl-GTP (m(7)GTP). May have a dual role in cell division arrest and in preventing the incorporation of modified nucleotides into cellular nucleic acids. The polypeptide is 7-methyl-GTP pyrophosphatase (Bordetella pertussis (strain Tohama I / ATCC BAA-589 / NCTC 13251)).